We begin with the raw amino-acid sequence, 200 residues long: Dephospho-CoA kinase (200 aa).

A DPCK domain is found at 4–200 (VIGLTGGIAS…AILKKWNIID (197 aa)). 12–17 (ASGKST) contacts ATP.

Belongs to the CoaE family.

Its subcellular location is the cytoplasm. The enzyme catalyses 3'-dephospho-CoA + ATP = ADP + CoA + H(+). The protein operates within cofactor biosynthesis; coenzyme A biosynthesis; CoA from (R)-pantothenate: step 5/5. Catalyzes the phosphorylation of the 3'-hydroxyl group of dephosphocoenzyme A to form coenzyme A. In Bacillus cereus (strain ZK / E33L), this protein is Dephospho-CoA kinase.